We begin with the raw amino-acid sequence, 296 residues long: Probable deoxyuridine 5'-triphosphate nucleotidohydrolase (296 aa).

The stretch at 66–102 (EIDKNIVKNLEDKVNCLEQDVQYLKNELKKKDADWQQ) forms a coiled coil.

The protein belongs to the dUTPase family.

It carries out the reaction dUTP + H2O = dUMP + diphosphate + H(+). It functions in the pathway pyrimidine metabolism; dUMP biosynthesis; dUMP from dCTP (dUTP route): step 2/2. This enzyme is involved in nucleotide metabolism: it produces dUMP, the immediate precursor of thymidine nucleotides and it decreases the intracellular concentration of dUTP so that uracil cannot be incorporated into DNA. This is Probable deoxyuridine 5'-triphosphate nucleotidohydrolase from Acheta domesticus (House cricket).